The chain runs to 925 residues: MVMADGPRHLQRGPVRVGFYDIEGTLGKGNFAVVKLGRHRITKTEVAIKIIDKSQLDAVNLEKIYREVQIMKMLDHPHIIKLYQVMETKSMLYLVTEYAKNGEIFDYLANHGRLNESEARRKFWQILSAVDYCHGRKIVHRDLKAENLLLDNNMNIKIADFSFGNFFKSGELLATWRGSPPYAAPEVFEGQQYEGPQLDIWSMGVVLYVLVCGALPFDGPTLPILRQRVLEGRFRIPYFMSEDCEHLIRRMLVLDPSKRLTIAQIKEHKWMLIEVPVQRPVLYPQEQENEPSIGEFNEQVLRLMHSLGIDQQKTIESLQNKSYNHFAAIYFLLVERLKSHRSSFPVEQRLDGRQRRPSAIAEQTVAKAQTVGLPVTMHSPNMRLLRSALLPQASNVEAFSFPASGCQAETAFMEEECVDTPKVNGCLLDPVPPVLVRKGCQSLPSNMMETSIDEGLETEGEAEEDPAHAFEAFQSTRSGQRRHTLSEVTNQLVVMPGAGKIFSMNDSPSLDSVDSEYDMGSVQRDLNFLEDNPSLKDIMLANQPSPRKTSPFISLRPTNPAMQALSSQKREVHNRSPVSFREGRRASDTSLTQGIVAFRQHLQNLARTKGILELNKVQLLYEQIGPEADPNLAPAAPQLQDHASSCPQEEVSQQQESVSTLPASVHPQLSPRQSLETQYLQHRLQKPSLLSKAQNTCQLYCKEPPRSLEQQLQEHRLQQKRLFLQKQSQLQAYFNQMQIAESSYPQPSQQLPLPRQETPPPSQQAPPFSLTQPLSPVLEPSSEQMQYSPFLSQYQEMQLQPLPSTSSPRAAPLPTQLQQQQPPPPPPPPPPRQPGAAPAPLQFSYQTCELPSAAPPAPDYPTPCQYPVDGAQQSDLTGPDCPRSPGLQEAPSSYDPLALSELPGLFDCEMLDAVDPQHNGYVLAN.

The Protein kinase domain occupies 20-271 (YDIEGTLGKG…IAQIKEHKWM (252 aa)). A Phosphothreonine modification is found at Thr25. Residues 26–34 (LGKGNFAVV) and Lys49 each bind ATP. Lys53 is subject to N6-acetyllysine; by EP300. The active-site Proton acceptor is Asp142. Phosphothreonine is present on Thr175. The UBA domain maps to 295-335 (EFNEQVLRLMHSLGIDQQKTIESLQNKSYNHFAAIYFLLVE). Ser534 bears the Phosphoserine mark. A disordered region spans residues 564 to 586 (ALSSQKREVHNRSPVSFREGRRA). At Ser587 the chain carries Phosphoserine. Disordered regions lie at residues 630–674 (PNLA…PRQS), 742–776 (SSYP…PLSP), and 800–895 (QPLP…SSYD). Composition is skewed to low complexity over residues 648-659 (QEEVSQQQESVS) and 742-756 (SSYP…LPRQ). Positions 765–774 (APPFSLTQPL) are enriched in polar residues. Positions 808-820 (PRAAPLPTQLQQQ) are enriched in low complexity. Over residues 821–833 (QPPPPPPPPPPRQ) the composition is skewed to pro residues.

This sequence belongs to the protein kinase superfamily. CAMK Ser/Thr protein kinase family. SNF1 subfamily. As to quaternary structure, interacts with and phosphorylates TORC2/CRTC2. Requires Mg(2+) as cofactor. In terms of processing, phosphorylated at Thr-175 by STK11/LKB1 in complex with STE20-related adapter-alpha (STRADA) pseudo kinase and CAB39. Phosphorylated at Thr-484 in response to insulin in adipocytes. Acetylation at Lys-53 inhibits kinase activity. Deacetylated by HDAC6.

The protein localises to the cytoplasm. The protein resides in the endoplasmic reticulum membrane. It catalyses the reaction L-seryl-[protein] + ATP = O-phospho-L-seryl-[protein] + ADP + H(+). It carries out the reaction L-threonyl-[protein] + ATP = O-phospho-L-threonyl-[protein] + ADP + H(+). Its activity is regulated as follows. Activated by phosphorylation on Thr-175. Functionally, serine/threonine-protein kinase that plays a role in many biological processes such as fatty acid oxidation, autophagy, immune response or glucose metabolism. Phosphorylates 'Ser-794' of IRS1 in insulin-stimulated adipocytes, potentially modulating the efficiency of insulin signal transduction. Inhibits CREB activity by phosphorylating and repressing TORCs, the CREB-specific coactivators. Phosphorylates EP300 and thus inhibits its histone acetyltransferase activity. In turn, regulates the DNA-binding ability of several transcription factors such as PPARA or MLXIPL. Also plays a role in thymic T-cell development. In Pongo abelii (Sumatran orangutan), this protein is Serine/threonine-protein kinase SIK2 (SIK2).